Reading from the N-terminus, the 858-residue chain is Protein VACUOLELESS1 (858 aa).

The protein belongs to the VPS16 family. Core component of at least two putative endosomal tethering complexes, the homotypic fusion and vacuole protein sorting (HOPS) complex and the class C core vacuole/endosome tethering (CORVET) complex. Their common core is composed of the class C Vps proteins VPS11, VCL1, VPS18 and VPS33, which in HOPS further associates with VPS39 and VPS41 and in CORVET with VPS3. As to expression, expressed in roots, leaves, stems, siliques, flowers and mature pollen.

Its subcellular location is the vacuole membrane. The protein resides in the prevacuolar compartment membrane. Functionally, required for vacuole biogenesis and vacuole enlargment in dividing and expanding cells. Involved in the docking or fusion of prevacuolar vesicles. Important for the function of both male and female gametophytes, but is not essential for the germination and development of pollen. This is Protein VACUOLELESS1 (VCL1) from Arabidopsis thaliana (Mouse-ear cress).